The sequence spans 140 residues: PDZ domain-containing protein 11 (140 aa).

Residues 47 to 129 (TITLKKPPGA…ISMRVRFFPY (83 aa)) enclose the PDZ domain.

In terms of assembly, interacts with ATP2B1, ATP2B2, ATP2B3, ATP2B4 and ATP7A. Interacts with PLEKHA7 (via WW domains) at zonula adherens; this interaction is essential for the interaction between PLEKHA7 and the ADAM10-binding protein TSPAN33. Interacts with SLC5A6. In terms of tissue distribution, widely expressed (at protein level).

The protein localises to the secreted. The protein resides in the cytoplasm. It is found in the cell junction. It localises to the adherens junction. Its subcellular location is the cell membrane. In terms of biological role, mediates docking of ADAM10 to zonula adherens by interacting with PLEKHA7 which is required for PLEKHA7 to interact with the ADAM10-binding protein TSPAN33. The polypeptide is PDZ domain-containing protein 11 (PDZD11) (Homo sapiens (Human)).